The sequence spans 153 residues: Ribonuclease H (153 aa).

One can recognise an RNase H type-1 domain in the interval 1–142; the sequence is MTPEVVIYTD…ADALARKGLS (142 aa). The Mg(2+) site is built by aspartate 10, glutamate 48, aspartate 70, and aspartate 134.

This sequence belongs to the RNase H family. In terms of assembly, monomer. Mg(2+) serves as cofactor.

It localises to the cytoplasm. The enzyme catalyses Endonucleolytic cleavage to 5'-phosphomonoester.. Its function is as follows. Endonuclease that specifically degrades the RNA of RNA-DNA hybrids. This chain is Ribonuclease H, found in Phenylobacterium zucineum (strain HLK1).